A 424-amino-acid chain; its full sequence is Tubulin-specific chaperone cofactor E-like protein (424 aa).

Residues Ser18 and Ser41 each carry the phosphoserine modification. LRR repeat units lie at residues Cys73–Asn98, Val99–Gly123, Ser124–Leu147, Leu150–Cys172, Cys173–Val197, Phe199–Arg224, and Phe226–Ser250. The LRRCT domain occupies Ile262–Phe303. The region spanning Ala334–Lys424 is the Ubiquitin-like domain. The stretch at Phe350 to Leu375 forms a coiled coil.

The protein resides in the cytoplasm. Its subcellular location is the cytoskeleton. Its function is as follows. Acts as a regulator of tubulin stability. The chain is Tubulin-specific chaperone cofactor E-like protein (Tbcel) from Rattus norvegicus (Rat).